The primary structure comprises 537 residues: Glucans biosynthesis protein D 2 (537 aa).

The segment at residues 1 to 28 (MVTRRHLLASASLSATLAALGITPEALA) is a signal peptide (tat-type signal).

This sequence belongs to the OpgD/OpgG family. Post-translationally, predicted to be exported by the Tat system. The position of the signal peptide cleavage has not been experimentally proven.

It is found in the periplasm. It functions in the pathway glycan metabolism; osmoregulated periplasmic glucan (OPG) biosynthesis. Probably involved in the control of the structural glucose backbone of osmoregulated periplasmic glucans (OPGs). The chain is Glucans biosynthesis protein D 2 (opgD2) from Ralstonia nicotianae (strain ATCC BAA-1114 / GMI1000) (Ralstonia solanacearum).